Reading from the N-terminus, the 240-residue chain is Pyridoxine 5'-phosphate synthase (240 aa).

Asparagine 7 provides a ligand contact to 3-amino-2-oxopropyl phosphate. 9–10 (DH) is a binding site for 1-deoxy-D-xylulose 5-phosphate. Position 18 (arginine 18) interacts with 3-amino-2-oxopropyl phosphate. Histidine 43 acts as the Proton acceptor in catalysis. Arginine 45 and histidine 50 together coordinate 1-deoxy-D-xylulose 5-phosphate. Catalysis depends on glutamate 70, which acts as the Proton acceptor. 1-deoxy-D-xylulose 5-phosphate is bound at residue threonine 100. Histidine 191 serves as the catalytic Proton donor. 3-amino-2-oxopropyl phosphate-binding positions include glycine 192 and 213-214 (GH).

It belongs to the PNP synthase family. In terms of assembly, homooctamer; tetramer of dimers.

It is found in the cytoplasm. It catalyses the reaction 3-amino-2-oxopropyl phosphate + 1-deoxy-D-xylulose 5-phosphate = pyridoxine 5'-phosphate + phosphate + 2 H2O + H(+). The protein operates within cofactor biosynthesis; pyridoxine 5'-phosphate biosynthesis; pyridoxine 5'-phosphate from D-erythrose 4-phosphate: step 5/5. Functionally, catalyzes the complicated ring closure reaction between the two acyclic compounds 1-deoxy-D-xylulose-5-phosphate (DXP) and 3-amino-2-oxopropyl phosphate (1-amino-acetone-3-phosphate or AAP) to form pyridoxine 5'-phosphate (PNP) and inorganic phosphate. In Synechococcus elongatus (strain ATCC 33912 / PCC 7942 / FACHB-805) (Anacystis nidulans R2), this protein is Pyridoxine 5'-phosphate synthase.